The sequence spans 87 residues: Large ribosomal subunit protein uL23c (87 aa).

Belongs to the universal ribosomal protein uL23 family. In terms of assembly, part of the 50S ribosomal subunit.

It localises to the plastid. The protein resides in the chloroplast. Its function is as follows. Binds to 23S rRNA. In Bigelowiella natans (Pedinomonas minutissima), this protein is Large ribosomal subunit protein uL23c (rpl23).